The following is a 367-amino-acid chain: Chorismate synthase (367 aa).

Arg48 serves as a coordination point for NADP(+). FMN-binding positions include 125–127 (RSS), 243–244 (NA), Gly283, 298–302 (KPTSS), and Arg324.

It belongs to the chorismate synthase family. As to quaternary structure, homotetramer. It depends on FMNH2 as a cofactor.

It catalyses the reaction 5-O-(1-carboxyvinyl)-3-phosphoshikimate = chorismate + phosphate. The protein operates within metabolic intermediate biosynthesis; chorismate biosynthesis; chorismate from D-erythrose 4-phosphate and phosphoenolpyruvate: step 7/7. In terms of biological role, catalyzes the anti-1,4-elimination of the C-3 phosphate and the C-6 proR hydrogen from 5-enolpyruvylshikimate-3-phosphate (EPSP) to yield chorismate, which is the branch point compound that serves as the starting substrate for the three terminal pathways of aromatic amino acid biosynthesis. This reaction introduces a second double bond into the aromatic ring system. The chain is Chorismate synthase from Psychrobacter cryohalolentis (strain ATCC BAA-1226 / DSM 17306 / VKM B-2378 / K5).